The sequence spans 453 residues: Gamma-aminobutyric acid receptor subunit alpha-6 (453 aa).

The N-terminal stretch at methionine 1–alanine 19 is a signal peptide. The Extracellular portion of the chain corresponds to glutamine 20–phenylalanine 243. The N-linked (GlcNAc...) asparagine glycan is linked to asparagine 31. Arginine 84 provides a ligand contact to 4-aminobutanoate. Residues asparagine 128 and asparagine 141 are each glycosylated (N-linked (GlcNAc...) asparagine). Threonine 147 is a binding site for 4-aminobutanoate. Cysteine 156 and cysteine 170 are oxidised to a cystine. A helical transmembrane segment spans residues methionine 244–isoleucine 264. The Cytoplasmic portion of the chain corresponds to asparagine 265 to proline 270. A helical transmembrane segment spans residues alanine 271 to alanine 290. The Extracellular segment spans residues arginine 291–aspartate 304. A helical transmembrane segment spans residues tryptophan 305 to asparagine 325. The Cytoplasmic segment spans residues tyrosine 326–arginine 422. A Phosphoserine modification is found at serine 375. Residues isoleucine 423–lysine 443 traverse the membrane as a helical segment. Over aspartate 444–glutamate 453 the chain is Extracellular.

This sequence belongs to the ligand-gated ion channel (TC 1.A.9) family. Gamma-aminobutyric acid receptor (TC 1.A.9.5) subfamily. GABRA6 sub-subfamily. As to quaternary structure, heteropentamer, formed by a combination of alpha (GABRA1-6), beta (GABRB1-3), gamma (GABRG1-3), delta (GABRD), epsilon (GABRE), rho (GABRR1-3), pi (GABRP) and theta (GABRQ) chains, each subunit exhibiting distinct physiological and pharmacological properties. Binds UBQLN1. Expressed in brain, in cerebellar granule cells.

The protein resides in the postsynaptic cell membrane. It localises to the cell membrane. The catalysed reaction is chloride(in) = chloride(out). Functionally, alpha subunit of the heteropentameric ligand-gated chloride channel gated by gamma-aminobutyric acid (GABA), a major inhibitory neurotransmitter in the brain. GABA-gated chloride channels, also named GABA(A) receptors (GABAAR), consist of five subunits arranged around a central pore and contain GABA active binding site(s) located at the alpha and beta subunit interface(s). When activated by GABA, GABAARs selectively allow the flow of chloride anions across the cell membrane down their electrochemical gradient. Alpha-6/GABRA6 subunits are found at both synaptic and extrasynaptic sites. Chloride influx into the postsynaptic neuron following GABAAR opening decreases the neuron ability to generate a new action potential, thereby reducing nerve transmission. Extrasynaptic alpha-6-containing receptors contribute to the tonic GABAergic inhibition. Alpha-6 subunits are also present on glutamatergic synapses. The chain is Gamma-aminobutyric acid receptor subunit alpha-6 from Mus musculus (Mouse).